A 150-amino-acid chain; its full sequence is Spore germination protein GerT (150 aa).

It localises to the spore coat. Involved in spore germination. The sequence is that of Spore germination protein GerT (gerT) from Bacillus licheniformis (strain ATCC 14580 / DSM 13 / JCM 2505 / CCUG 7422 / NBRC 12200 / NCIMB 9375 / NCTC 10341 / NRRL NRS-1264 / Gibson 46).